The primary structure comprises 270 residues: Cell division protein DivIB (270 aa).

At 1 to 38 (MTRRNNPELNDEREPIDKIKASIDLKKKTIRRNKRKRR) the chain is on the cytoplasmic side. Residues 39 to 59 (LIKMLQFLIVIGVLIGIYYFD) form a helical membrane-spanning segment. Residues 60–270 (KSDASRVHNV…QSAVVKACGS (211 aa)) lie on the Extracellular side of the membrane. The POTRA domain occupies 64–135 (SRVHNVRVNG…INLNVTEKKA (72 aa)).

This sequence belongs to the FtsQ/DivIB family. DivIB subfamily.

It localises to the cell membrane. Cell division protein that may be involved in stabilizing or promoting the assembly of the division complex. This chain is Cell division protein DivIB, found in Erysipelothrix rhusiopathiae (strain Fujisawa).